We begin with the raw amino-acid sequence, 718 residues long: Gephyrin (718 aa).

Over residues 1-19 (MSNTLTTERNITNSPTAAQ) the composition is skewed to polar residues. Residues 1-26 (MSNTLTTERNITNSPTAAQLNEKESG) are disordered. Residues 31 to 176 (EWIVGVLTTS…LPGSVKAIRE (146 aa)) are MPT Mo-transferase. Residues 222–244 (NQNNQNNNNNNNNNNNNNNNNNS) show a composition bias toward low complexity. Disordered regions lie at residues 222–266 (NQNN…SSYN) and 344–364 (TGEN…NDDD). Residues 245 to 254 (HNHHHHHHHS) show a composition bias toward basic residues. The MPT adenylyltransferase stretch occupies residues 260 to 718 (KRGSSYNMTP…KAILIGPINN (459 aa)).

The protein in the N-terminal section; belongs to the MoaB/Mog family. It in the C-terminal section; belongs to the MoeA family. Homotrimer, homodimer and homooligomer. The cofactor is Mg(2+).

It is found in the cell membrane. The protein localises to the cytoplasm. The protein resides in the cytosol. Its subcellular location is the cytoskeleton. It catalyses the reaction molybdopterin + ATP + H(+) = adenylyl-molybdopterin + diphosphate. It carries out the reaction adenylyl-molybdopterin + molybdate = Mo-molybdopterin + AMP + H(+). It functions in the pathway cofactor biosynthesis; molybdopterin biosynthesis. Microtubule-associated protein involved in membrane protein-cytoskeleton interactions. In terms of biological role, also has a catalytic activity and catalyzes two steps in the biosynthesis of the molybdenum cofactor. In the first step, molybdopterin is adenylated. Subsequently, molybdate is inserted into adenylated molybdopterin and AMP is released. The chain is Gephyrin (gphn) from Dictyostelium discoideum (Social amoeba).